Consider the following 492-residue polypeptide: Beclin 1-associated autophagy-related key regulator (492 aa).

Phosphoserine is present on serine 29. Residues 70 to 180 (RDRERFIDKK…KLGDLVEKKT (111 aa)) adopt a coiled-coil conformation. Disordered regions lie at residues 213–232 (TSGR…MTSS) and 411–473 (GVAG…AGGM). The segment covering 222–232 (SSETDSAMTSS) has biased composition (polar residues). Serine 416 bears the Phosphoserine mark. Acidic residues predominate over residues 424–433 (VSDEETDLGT). A Phosphothreonine modification is found at threonine 429. Low complexity predominate over residues 447-473 (PSQPVEVSQSQSTQASPPIASSSAGGM).

The protein belongs to the ATG14 family. As to quaternary structure, forms homooligomers; homo-oligomerization is essential for the roles in membrane tethering and enhancement of SNARE-mediated fusion. Component of the PI3K (PI3KC3/PI3K-III/class III phosphatidylinositol 3-kinase) complex I (PI3KC3-C1) in which the core composed of the catalytic subunit PIK3C3, the regulatory subunit PIK3R4 and BECN1 is associated with ATG14. PI3KC3-C1 displays a V-shaped architecture with PIK3R4 serving as a bridge between PIK3C3 and the ATG14:BECN1 subcomplex. PI3KC3-C1 can associate with further regulatory subunits. Interacts with PIK3CB. Interacts (via coiled-coil domain) with BECN2 (via coiled-coil domain); this interaction is tighter than BECN2 self-association. Interacts with the STX17-SNAP29 binary t-SNARE complex. Interacts with NRBF2. Interacts with PIK3C3 and BECN1; this interaction is increased in the absence of TMEM39A. Interacts with STEEP1; the interaction is required for trafficking of STING1 from the endoplasmic reticulum. Interacts with ARMC3 (via ARM domains). Ubiquitinated via 'Lys-6', 'Lys-11' and 'Lys-63'-linked polyubiquitin chains on multiple lysines by MARCHF7, leading to ATG14 aggregation and loss of interaction with STX17.

The protein localises to the cytoplasm. The protein resides in the endoplasmic reticulum membrane. Its subcellular location is the preautophagosomal structure membrane. In terms of biological role, required for both basal and inducible autophagy. Determines the localization of the autophagy-specific PI3-kinase complex. Plays a role in autophagosome formation and MAP1LC3/LC3 conjugation to phosphatidylethanolamine. Promotes BECN1 translocation from the trans-Golgi network to autophagosomes. Enhances PIK3C3 activity in a BECN1-dependent manner. Essential for the autophagy-dependent phosphorylation of BECN1. Stimulates the phosphorylation of BECN1, but suppresses the phosphorylation PIK3C3 by AMPK. Binds to STX17-SNAP29 binary t-SNARE complex on autophagosomes and primes it for VAMP8 interaction to promote autophagosome-endolysosome fusion. Modulates the hepatic lipid metabolism. The polypeptide is Beclin 1-associated autophagy-related key regulator (Rattus norvegicus (Rat)).